We begin with the raw amino-acid sequence, 63 residues long: Arabinogalactan protein 41 (63 aa).

The signal sequence occupies residues 1–27; sequence MSGSRLFFGVSTIVSIIFAILLPMAHA. Residue Q28 is modified to Pyrrolidone carboxylic acid. 4-hydroxyproline occurs at positions 32, 34, and 36. P32, P34, and P36 each carry an O-linked (Ara...) hydroxyproline glycan. A lipid anchor (GPI-anchor amidated serine) is attached at S38. The propeptide at 39–63 is removed in mature form; sequence DGTTIDQGIAYVLMLVALVLTYLIH.

It belongs to the AG-peptide AGP family. Post-translationally, contains 4-hydroxyproline; hydroxylated on Pro-32, Pro-34 and Pro-36. In terms of processing, O-glycosylated on hydroxyprolines; noncontiguous hydroxylproline residues are glycosylated with arabinogalactan.

The protein localises to the cell membrane. Proteoglycan that seems to be implicated in diverse developmental roles such as differentiation, cell-cell recognition, embryogenesis and programmed cell death. The polypeptide is Arabinogalactan protein 41 (Arabidopsis thaliana (Mouse-ear cress)).